We begin with the raw amino-acid sequence, 137 residues long: Large ribosomal subunit protein uL16 (137 aa).

The protein belongs to the universal ribosomal protein uL16 family. Part of the 50S ribosomal subunit.

In terms of biological role, binds 23S rRNA and is also seen to make contacts with the A and possibly P site tRNAs. The chain is Large ribosomal subunit protein uL16 from Streptococcus agalactiae serotype Ia (strain ATCC 27591 / A909 / CDC SS700).